A 984-amino-acid polypeptide reads, in one-letter code: Probable beta-galactosidase C (984 aa).

A signal peptide spans 1-23 (MRLLSFIYLVWLALLTGTPQVSA). Substrate contacts are provided by Tyr-82, Asn-127, Ala-128, Glu-129, and Asn-187. The Proton donor role is filled by Glu-188. The N-linked (GlcNAc...) asparagine glycan is linked to Asn-197. Position 251 (Tyr-251) interacts with substrate. Cys-257 and Cys-304 are joined by a disulfide. Residue Asn-276 is glycosylated (N-linked (GlcNAc...) asparagine). Glu-287 acts as the Nucleophile in catalysis. Tyr-353 serves as a coordination point for substrate. Asn-391, Asn-421, Asn-434, Asn-517, Asn-602, Asn-677, Asn-715, Asn-720, Asn-759, and Asn-805 each carry an N-linked (GlcNAc...) asparagine glycan.

Belongs to the glycosyl hydrolase 35 family.

It is found in the secreted. It carries out the reaction Hydrolysis of terminal non-reducing beta-D-galactose residues in beta-D-galactosides.. Its function is as follows. Cleaves beta-linked terminal galactosyl residues from gangliosides, glycoproteins, and glycosaminoglycans. In Aspergillus oryzae (strain ATCC 42149 / RIB 40) (Yellow koji mold), this protein is Probable beta-galactosidase C (lacC).